The sequence spans 473 residues: Kynurenine 3-monooxygenase (473 aa).

The protein belongs to the aromatic-ring hydroxylase family. KMO subfamily. It depends on FAD as a cofactor.

The protein localises to the mitochondrion outer membrane. The catalysed reaction is L-kynurenine + NADPH + O2 + H(+) = 3-hydroxy-L-kynurenine + NADP(+) + H2O. Its pathway is cofactor biosynthesis; NAD(+) biosynthesis; quinolinate from L-kynurenine: step 1/3. Functionally, catalyzes the hydroxylation of L-kynurenine (L-Kyn) to form 3-hydroxy-L-kynurenine (L-3OHKyn). Required for synthesis of quinolinic acid. The polypeptide is Kynurenine 3-monooxygenase (Debaryomyces hansenii (strain ATCC 36239 / CBS 767 / BCRC 21394 / JCM 1990 / NBRC 0083 / IGC 2968) (Yeast)).